Here is a 608-residue protein sequence, read N- to C-terminus: Mitogen-activated protein kinase kinase kinase 1 (608 aa).

Residues 1–13 show a composition bias toward basic residues; it reads MDRILARMKKSTG. The tract at residues 1-20 is disordered; sequence MDRILARMKKSTGRRGGDKN. The segment at 1-325 is regulatory region; that stretch reads MDRILARMKK…VSNTSPIYPD (325 aa). S62 is subject to Phosphoserine. Positions 192 to 234 are binding with MPK4; sequence MERTPTIVKSKGYLVPNNVVAVGVGVGGGIKGLRPPVLKPPPA. 2 disordered regions span residues 228–247 and 256–287; these read VLKP…GSSW and SETV…EAEE. Acidic residues predominate over residues 271-287; sequence DGCDEEEGKEEEAEAEE. The region spanning 333-587 is the Protein kinase domain; that stretch reads WQKGQLLGRG…AAELLNHPFV (255 aa). ATP is bound by residues 339 to 347 and K361; that span reads LGRGSFGSV. D456 functions as the Proton acceptor in the catalytic mechanism. S603 is modified (phosphoserine).

It belongs to the protein kinase superfamily. STE Ser/Thr protein kinase family. MAP kinase kinase kinase subfamily. In terms of assembly, interacts with MKK1, MMK2 and MPK4. May form a ternary complex composed of MEKK1 and MKK1/MKK2 and MPK4. Interacts with RACK1A, RACK1B and RACK1C. Binds to CRLK1. Phosphorylated by CRLK1 in response to cold.

The protein resides in the cell membrane. It localises to the endosome. The enzyme catalyses L-seryl-[protein] + ATP = O-phospho-L-seryl-[protein] + ADP + H(+). It carries out the reaction L-threonyl-[protein] + ATP = O-phospho-L-threonyl-[protein] + ADP + H(+). Its activity is regulated as follows. Activated by cold via CRLK1-mediated phosphorylation and leading to elevated kinase activity towards MKK2. The MEKK1, MKK1/MKK2 and MPK4 function in a signaling pathway that modulates the expression of genes responding to biotic and abiotic stresses and also plays an important role in pathogen defense by negatively regulating innate immunity. Involved in the innate immune MAP kinase signaling cascade (MEKK1, MKK4/MKK5 and MPK3/MPK6) downstream of bacterial flagellin receptor FLS2. May be involved in the cold and salinity stress-mediated MAP kinase signaling cascade (MEKK1, MKK1/MKK2 and MPK4/MPK6). Activates by phosphorylation the downstream MKK2, MKK4 and MKK5 in a calcium-dependent manner. This chain is Mitogen-activated protein kinase kinase kinase 1 (MEKK1), found in Arabidopsis thaliana (Mouse-ear cress).